An 89-amino-acid chain; its full sequence is uncharacterized protein (89 aa).

Basic residues-rich tracts occupy residues 1–17 (MPPH…HGHH) and 65–89 (HHGH…HGHH). Disordered regions lie at residues 1-25 (MPPH…ITPV) and 60-89 (LETG…HGHH).

This is an uncharacterized protein from Dictyostelium discoideum (Social amoeba).